Reading from the N-terminus, the 284-residue chain is 4-diphosphocytidyl-2-C-methyl-D-erythritol kinase (284 aa).

The active site involves Lys14. 98–108 (PMGGGIGGGSS) is a binding site for ATP. The active site involves Asp140.

It belongs to the GHMP kinase family. IspE subfamily.

The catalysed reaction is 4-CDP-2-C-methyl-D-erythritol + ATP = 4-CDP-2-C-methyl-D-erythritol 2-phosphate + ADP + H(+). It participates in isoprenoid biosynthesis; isopentenyl diphosphate biosynthesis via DXP pathway; isopentenyl diphosphate from 1-deoxy-D-xylulose 5-phosphate: step 3/6. Catalyzes the phosphorylation of the position 2 hydroxy group of 4-diphosphocytidyl-2C-methyl-D-erythritol. This chain is 4-diphosphocytidyl-2-C-methyl-D-erythritol kinase, found in Shewanella woodyi (strain ATCC 51908 / MS32).